Consider the following 417-residue polypeptide: Ig-like V-type domain-containing protein FAM187A (417 aa).

An N-terminal signal peptide occupies residues 1 to 18 (MSLAHTTVLLWAWGSLQA). The Extracellular portion of the chain corresponds to 19–377 (FEIVEKESVF…ASLSDPETRT (359 aa)). N-linked (GlcNAc...) asparagine glycosylation is found at asparagine 248 and asparagine 318. Residues 268 to 362 (PWVPQVPIQF…IAGFRLGVIT (95 aa)) enclose the Ig-like V-type domain. Cysteine 290 and cysteine 346 form a disulfide bridge. Residues 378–398 (AIELTLMGYLLITIFFITIHL) traverse the membrane as a helical segment. At 399–417 (CRCCCQSRCCPNFSAQTLL) the chain is on the cytoplasmic side.

This sequence belongs to the FAM187 family.

The protein resides in the membrane. The sequence is that of Ig-like V-type domain-containing protein FAM187A (Fam187a) from Mus musculus (Mouse).